A 137-amino-acid polypeptide reads, in one-letter code: Large ribosomal subunit protein uL16 (137 aa).

Residues 1–21 are compositionally biased toward basic residues; the sequence is MLSPKKVKFRKRQKGRLKGKA. The tract at residues 1–22 is disordered; the sequence is MLSPKKVKFRKRQKGRLKGKAQ.

The protein belongs to the universal ribosomal protein uL16 family. Part of the 50S ribosomal subunit.

Its function is as follows. Binds 23S rRNA and is also seen to make contacts with the A and possibly P site tRNAs. The chain is Large ribosomal subunit protein uL16 from Maridesulfovibrio salexigens (strain ATCC 14822 / DSM 2638 / NCIMB 8403 / VKM B-1763) (Desulfovibrio salexigens).